A 525-amino-acid chain; its full sequence is uncharacterized protein (525 aa).

A run of 2 helical transmembrane segments spans residues 36–56 (AVAAVSLTALPIVPLALTLAL) and 61–81 (ALPAGAALWASASLLAAAAAI). Residues 173–228 (SAVDIRLERTSADGPQFAHIYCEMTPLRDAEGNLLAIVAQSRDVSEEARLQAEAAA) form the PAC domain. Positions 246-466 (AVSHELRTPL…VIVVTIPSDA (221 aa)) constitute a Histidine kinase domain. His-249 carries the phosphohistidine; by autocatalysis modification. The tract at residues 506–525 (LHTGEIGREGGHGAAQAKTA) is disordered.

The protein localises to the cell membrane. The catalysed reaction is ATP + protein L-histidine = ADP + protein N-phospho-L-histidine.. This is an uncharacterized protein from Rhizobium meliloti (strain 1021) (Ensifer meliloti).